We begin with the raw amino-acid sequence, 3066 residues long: Genome polyprotein (3066 aa).

Positions 176–317 (LKKAVGSGKV…LDNVYTIEHY (142 aa)) constitute a Peptidase S30 domain. Catalysis depends on for P1 proteinase activity residues His-230, Glu-239, and Ser-271. Positions 370-373 (KLSC) match the Involved in interaction with stylet and aphid transmission motif. Positions 626–628 (PTK) match the Involved in virions binding and aphid transmission motif. In terms of domain architecture, Peptidase C6 spans 652–774 (MYIAKEGYCY…EGEMKHYRVG (123 aa)). Residues Cys-660 and His-733 each act as for helper component proteinase activity in the active site. Residues 1245 to 1397 (TITLSTSTEF…TQHPVKLKVE (153 aa)) enclose the Helicase ATP-binding domain. 1258–1265 (GAVGSGKS) contributes to the ATP binding site. The DECH box motif lies at 1347-1350 (DECH). The Helicase C-terminal domain maps to 1416–1575 (DMVQYGHNLL…GLPVTTQGVS (160 aa)). The Nuclear localization signal signature appears at 1900 to 1909 (KKGKQKGSTH). Tyr-1924 is modified (O-(5'-phospho-RNA)-tyrosine). Positions 2046–2264 (SKSTYKGLRD…IAWGSLNLVD (219 aa)) constitute a Peptidase C4 domain. Catalysis depends on for nuclear inclusion protein A activity residues His-2091, Asp-2126, and Cys-2196. The 125-residue stretch at 2530-2654 (WVYCHADGSQ…AVQKEDVWLY (125 aa)) folds into the RdRp catalytic domain. The interval 2797–2839 (EVYESVSTQSSKKEEEKDAGADEREKDKGKGPADKDVGAGSKG) is disordered. Residues 2807–2833 (SKKEEEKDAGADEREKDKGKGPADKDV) are compositionally biased toward basic and acidic residues. A Phosphothreonine modification is found at Thr-3048.

It belongs to the potyviridae genome polyprotein family. As to quaternary structure, interacts with host eIF4E protein (via cap-binding region); this interaction mediates the translation of the VPg-viral RNA conjugates. Part of a complex that comprises VPg, RNA, host EIF4E and EIF4G; this interaction mediates the translation of the VPg-viral RNA conjugates. In terms of processing, VPg is uridylylated by the polymerase and is covalently attached to the 5'-end of the genomic RNA. This uridylylated form acts as a nucleotide-peptide primer for the polymerase. Post-translationally, genome polyprotein of potyviruses undergoes post-translational proteolytic processing by the main proteinase NIa-pro resulting in the production of at least ten individual proteins. The P1 proteinase and the HC-pro cleave only their respective C-termini autocatalytically. 6K1 is essential for proper proteolytic separation of P3 from CI.

It localises to the host cytoplasmic vesicle. Its subcellular location is the host nucleus. The protein resides in the virion. The enzyme catalyses RNA(n) + a ribonucleoside 5'-triphosphate = RNA(n+1) + diphosphate. The catalysed reaction is Hydrolyzes glutaminyl bonds, and activity is further restricted by preferences for the amino acids in P6 - P1' that vary with the species of potyvirus, e.g. Glu-Xaa-Xaa-Tyr-Xaa-Gln-|-(Ser or Gly) for the enzyme from tobacco etch virus. The natural substrate is the viral polyprotein, but other proteins and oligopeptides containing the appropriate consensus sequence are also cleaved.. It catalyses the reaction Hydrolyzes a Gly-|-Gly bond at its own C-terminus, commonly in the sequence -Tyr-Xaa-Val-Gly-|-Gly, in the processing of the potyviral polyprotein.. Required for aphid transmission and also has proteolytic activity. Only cleaves a Gly-Gly dipeptide at its own C-terminus. Interacts with virions and aphid stylets. Acts as a suppressor of RNA-mediated gene silencing, also known as post-transcriptional gene silencing (PTGS), a mechanism of plant viral defense that limits the accumulation of viral RNAs. May have RNA-binding activity. Functionally, has helicase activity. It may be involved in replication. In terms of biological role, indispensable for virus replication. Reduces the abundance of host transcripts related to jasmonic acid biosynthesis therefore altering the host defenses. In order to increase its own stability, decreases host protein degradation pathways. Its function is as follows. Indispensable for virus replication. Mediates the cap-independent, EIF4E-dependent translation of viral genomic RNAs. Binds to the cap-binding site of host EIF4E and thus interferes with the host EIF4E-dependent mRNA export and translation. VPg-RNA directly binds EIF4E and is a template for transcription. Also forms trimeric complexes with EIF4E-EIF4G, which are templates for translation. Functionally, has RNA-binding and proteolytic activities. In terms of biological role, an RNA-dependent RNA polymerase that plays an essential role in the virus replication. Its function is as follows. Involved in aphid transmission, cell-to-cell and systemis movement, encapsidation of the viral RNA and in the regulation of viral RNA amplification. This is Genome polyprotein from Bean common mosaic necrosis virus (strain NL-3) (BCMNV).